A 291-amino-acid chain; its full sequence is ATP synthase gamma chain (291 aa).

It belongs to the ATPase gamma chain family. In terms of assembly, F-type ATPases have 2 components, CF(1) - the catalytic core - and CF(0) - the membrane proton channel. CF(1) has five subunits: alpha(3), beta(3), gamma(1), delta(1), epsilon(1). CF(0) has three main subunits: a, b and c.

Its subcellular location is the cell inner membrane. In terms of biological role, produces ATP from ADP in the presence of a proton gradient across the membrane. The gamma chain is believed to be important in regulating ATPase activity and the flow of protons through the CF(0) complex. This Neisseria meningitidis serogroup C / serotype 2a (strain ATCC 700532 / DSM 15464 / FAM18) protein is ATP synthase gamma chain.